The chain runs to 228 residues: Serum amyloid P-component (228 aa).

A signal peptide spans 1–20 (MDKLLLWMSVFTSLLSEAFA). One can recognise a Pentraxin (PTX) domain in the interval 25 to 224 (NQKVFVFPRE…YVVIKPRMWD (200 aa)). The N-linked (GlcNAc...) asparagine glycan is linked to Asn-52. A disulfide bridge links Cys-56 with Cys-115. The Ca(2+) site is built by Asp-78, Asn-79, Glu-156, Gln-157, Asp-158, and Gln-168.

The protein belongs to the pentraxin family. As to quaternary structure, homopentamer. Pentraxin (or pentaxin) have a discoid arrangement of 5 non-covalently bound subunits. It depends on Ca(2+) as a cofactor.

It is found in the secreted. The chain is Serum amyloid P-component (Apcs) from Rattus norvegicus (Rat).